The chain runs to 282 residues: Pantothenate synthetase (282 aa).

ATP is bound at residue 31–38; sequence MGYLHEGH. Residue histidine 38 is the Proton donor of the active site. Glutamine 62 provides a ligand contact to (R)-pantoate. Glutamine 62 is a binding site for beta-alanine. Position 148–151 (148–151) interacts with ATP; that stretch reads GEKD. Glutamine 154 serves as a coordination point for (R)-pantoate. Residues valine 177 and 185–188 each bind ATP; that span reads YSSR.

Belongs to the pantothenate synthetase family. In terms of assembly, homodimer.

The protein localises to the cytoplasm. It carries out the reaction (R)-pantoate + beta-alanine + ATP = (R)-pantothenate + AMP + diphosphate + H(+). It participates in cofactor biosynthesis; (R)-pantothenate biosynthesis; (R)-pantothenate from (R)-pantoate and beta-alanine: step 1/1. Its function is as follows. Catalyzes the condensation of pantoate with beta-alanine in an ATP-dependent reaction via a pantoyl-adenylate intermediate. This Aquifex aeolicus (strain VF5) protein is Pantothenate synthetase.